The following is a 392-amino-acid chain: Succinate--CoA ligase [ADP-forming] subunit beta (392 aa).

The ATP-grasp domain maps to 9 to 248 (KGLFRDYGVS…LHEEDPTEVK (240 aa)). ATP contacts are provided by residues Lys50, 57–59 (GRG), Val106, and Glu111. Mg(2+)-binding residues include Asn203 and Asp217. Residues Asn268 and 325 to 327 (GIV) contribute to the substrate site.

Belongs to the succinate/malate CoA ligase beta subunit family. In terms of assembly, heterotetramer of two alpha and two beta subunits. The cofactor is Mg(2+).

The enzyme catalyses succinate + ATP + CoA = succinyl-CoA + ADP + phosphate. The catalysed reaction is GTP + succinate + CoA = succinyl-CoA + GDP + phosphate. The protein operates within carbohydrate metabolism; tricarboxylic acid cycle; succinate from succinyl-CoA (ligase route): step 1/1. Succinyl-CoA synthetase functions in the citric acid cycle (TCA), coupling the hydrolysis of succinyl-CoA to the synthesis of either ATP or GTP and thus represents the only step of substrate-level phosphorylation in the TCA. The beta subunit provides nucleotide specificity of the enzyme and binds the substrate succinate, while the binding sites for coenzyme A and phosphate are found in the alpha subunit. This chain is Succinate--CoA ligase [ADP-forming] subunit beta, found in Salinibacter ruber (strain DSM 13855 / M31).